Here is a 184-residue protein sequence, read N- to C-terminus: MINDIKKDGEDRMKKTLEVLENAFSKVRTGRAHPGMLSGVMVSYYGADTPLNQVASVNVEDSRTLLVQPFERSMVQAVDKAIREADLGLNPMTADVIRVPMPALTEETRRDMQKLARGEAENSRVSIRNVRRDMLNDIKELAKEKEISEDDERRASDDIQKITDKYIASIDSKLEAKEKELMEV.

This sequence belongs to the RRF family.

The protein localises to the cytoplasm. Functionally, responsible for the release of ribosomes from messenger RNA at the termination of protein biosynthesis. May increase the efficiency of translation by recycling ribosomes from one round of translation to another. In Psychrobacter sp. (strain PRwf-1), this protein is Ribosome-recycling factor.